The following is a 220-amino-acid chain: 5'(3')-deoxyribonucleotidase, mitochondrial (220 aa).

The transit peptide at 1–23 directs the protein to the mitochondrion; sequence MHRLRGCCARPRGAPLRAERSRA. Catalysis depends on aspartate 33, which acts as the Nucleophile. 2 residues coordinate Mg(2+): aspartate 33 and aspartate 35. The Proton donor role is filled by aspartate 35. Substrate-binding residues include aspartate 35, phenylalanine 41, phenylalanine 67, tryptophan 68, valine 69, tryptophan 88, threonine 122, and lysine 157. Aspartate 168 serves as a coordination point for Mg(2+).

Belongs to the 5'(3')-deoxyribonucleotidase family. Homodimer. The cofactor is Mg(2+).

The protein localises to the mitochondrion. Dephosphorylates specifically the 5' and 2'(3')-phosphates of uracil and thymine deoxyribonucleotides, and so protects mitochondrial DNA replication from excess dTTP. Has only marginal activity towards dIMP and dGMP. In Mus musculus (Mouse), this protein is 5'(3')-deoxyribonucleotidase, mitochondrial (Nt5m).